We begin with the raw amino-acid sequence, 277 residues long: Inner kinetochore subunit sim4 (277 aa).

Residues 96 to 138 (NNISDLKKNLHSNKKLEAVLKEELHQIKKFSSDLQSLKSSMGE) are a coiled coil.

It belongs to the CENP-K/MCM22 family. In terms of assembly, component of the inner kinetochore constitutive centromere-associated network (CCAN) (also known as central kinetochore Sim4 complex in fission yeast), which is composed of at least cnl2, cnp3, cnp20, fta1, fta2, fta3, fta4, fta6, fta7, mal2, mhf1, mhf2, mis6, mis15, mis17, sim4 and wip1. Interacts with mis6 and dad1.

The protein localises to the nucleus. It localises to the chromosome. The protein resides in the centromere. Functionally, component of the kinetochore, a multiprotein complex that assembles on centromeric DNA and attaches chromosomes to spindle microtubules, mediating chromosome segregation and sister chromatid segregation during meiosis and mitosis. Component of the inner kinetochore constitutive centromere-associated network (CCAN), which serves as a structural platform for outer kinetochore assembly. This chain is Inner kinetochore subunit sim4 (sim4), found in Schizosaccharomyces pombe (strain 972 / ATCC 24843) (Fission yeast).